A 217-amino-acid chain; its full sequence is UPF0502 protein ESA_02280 (217 aa).

This sequence belongs to the UPF0502 family.

This Cronobacter sakazakii (strain ATCC BAA-894) (Enterobacter sakazakii) protein is UPF0502 protein ESA_02280.